A 37-amino-acid polypeptide reads, in one-letter code: Large ribosomal subunit protein bL36 (37 aa).

Belongs to the bacterial ribosomal protein bL36 family.

The sequence is that of Large ribosomal subunit protein bL36 from Leptospira interrogans serogroup Icterohaemorrhagiae serovar copenhageni (strain Fiocruz L1-130).